Consider the following 86-residue polypeptide: Large ribosomal subunit protein bL31B (86 aa).

The protein belongs to the bacterial ribosomal protein bL31 family. Type B subfamily. Part of the 50S ribosomal subunit.

The protein is Large ribosomal subunit protein bL31B of Burkholderia cenocepacia (strain ATCC BAA-245 / DSM 16553 / LMG 16656 / NCTC 13227 / J2315 / CF5610) (Burkholderia cepacia (strain J2315)).